The sequence spans 503 residues: Lysine--tRNA ligase (503 aa).

2 residues coordinate Mg(2+): E412 and E419.

This sequence belongs to the class-II aminoacyl-tRNA synthetase family. In terms of assembly, homodimer. Mg(2+) serves as cofactor.

The protein localises to the cytoplasm. The catalysed reaction is tRNA(Lys) + L-lysine + ATP = L-lysyl-tRNA(Lys) + AMP + diphosphate. In Idiomarina loihiensis (strain ATCC BAA-735 / DSM 15497 / L2-TR), this protein is Lysine--tRNA ligase.